A 299-amino-acid chain; its full sequence is Oxygen-dependent coproporphyrinogen-III oxidase (299 aa).

Residue Ser-92 coordinates substrate. Mn(2+) contacts are provided by His-96 and His-106. His-106 (proton donor) is an active-site residue. A substrate-binding site is contributed by 108 to 110; sequence NVR. Mn(2+) contacts are provided by His-145 and His-175. Residues 240–275 form an important for dimerization region; the sequence is YVEFNLVWDRGTLFGLQTGGRTESILMSMPPLVRWE. Position 258–260 (258–260) interacts with substrate; it reads GGR.

It belongs to the aerobic coproporphyrinogen-III oxidase family. As to quaternary structure, homodimer. Mn(2+) serves as cofactor.

The protein resides in the cytoplasm. The catalysed reaction is coproporphyrinogen III + O2 + 2 H(+) = protoporphyrinogen IX + 2 CO2 + 2 H2O. It functions in the pathway porphyrin-containing compound metabolism; protoporphyrin-IX biosynthesis; protoporphyrinogen-IX from coproporphyrinogen-III (O2 route): step 1/1. Its function is as follows. Involved in the heme biosynthesis. Catalyzes the aerobic oxidative decarboxylation of propionate groups of rings A and B of coproporphyrinogen-III to yield the vinyl groups in protoporphyrinogen-IX. The polypeptide is Oxygen-dependent coproporphyrinogen-III oxidase (Escherichia fergusonii (strain ATCC 35469 / DSM 13698 / CCUG 18766 / IAM 14443 / JCM 21226 / LMG 7866 / NBRC 102419 / NCTC 12128 / CDC 0568-73)).